Consider the following 240-residue polypeptide: Cysteine-rich venom protein ablomin (240 aa).

The signal sequence occupies residues 1–19 (MIVFIVLPILAAVLQQSSG). The 129-residue stretch at 38-166 (VDLHNSLRRS…EYSYFYVCQY (129 aa)) folds into the SCP domain. 8 disulfide bridges follow: C75–C153, C92–C167, C148–C164, C186–C193, C189–C198, C202–C235, C211–C229, and C220–C233. The region spanning 202 to 235 (CTQEDVFTNCNSLVQQSNCQHNYIKTNCPASCFC) is the ShKT domain.

This sequence belongs to the CRISP family. Expressed by the venom gland.

It is found in the secreted. Blocks contraction of smooth muscle elicited by high potassium-induced depolarization, but does not block caffeine-stimulated contraction. Since high potassium-treatment activates voltage-gated channels and caffeine exposure activates ryanodine receptors, this toxin may target L-type voltage-gated calcium channels (Cav) (and not ryanodine receptors) on smooth muscle. This toxin also shows a little inhibition on cyclic nucleotide-gated CNGA1 channel. The protein is Cysteine-rich venom protein ablomin of Gloydius blomhoffii (Mamushi).